Here is a 148-residue protein sequence, read N- to C-terminus: Large ribosomal subunit protein bL9 (148 aa).

This sequence belongs to the bacterial ribosomal protein bL9 family.

Functionally, binds to the 23S rRNA. The chain is Large ribosomal subunit protein bL9 from Ectopseudomonas mendocina (strain ymp) (Pseudomonas mendocina).